We begin with the raw amino-acid sequence, 147 residues long: MEIFNVEELINMKPFKNMNKITINQKDNCILANRCFVKIDTPRYIPSTSISSSNIIRIRNHDFTLSELLYSPFHFQQPQFQYLLPGFVLTCIDKVSKQQKKCKYCISNRGDDDSLSINLFIPTINKSIYIIIGLRMKNFWKPKFEIE.

It belongs to the orthopoxvirus OPG058 family.

The chain is Protein OPG060 (OPG060) from Bos taurus (Bovine).